Consider the following 333-residue polypeptide: Probable cytosolic iron-sulfur protein assembly protein ciao1-B (333 aa).

7 WD repeats span residues 14–53 (HPDS…WECK), 59–98 (GHQR…FECL), 103–142 (GHEN…EYEC), 148–187 (SHTQ…WECR), 192–231 (GHTS…GGQE), 246–285 (FHGR…DPDQ), and 297–333 (AHTQ…QSGV).

The protein belongs to the WD repeat CIA1 family. Component of the CIA complex.

In terms of biological role, key component of the cytosolic iron-sulfur protein assembly (CIA) complex, a multiprotein complex that mediates the incorporation of iron-sulfur cluster into extramitochondrial Fe/S proteins. The protein is Probable cytosolic iron-sulfur protein assembly protein ciao1-B (ciao1b) of Salmo salar (Atlantic salmon).